The sequence spans 89 residues: Small ribosomal subunit protein bS20 (89 aa).

It belongs to the bacterial ribosomal protein bS20 family.

In terms of biological role, binds directly to 16S ribosomal RNA. The chain is Small ribosomal subunit protein bS20 from Wolbachia sp. subsp. Brugia malayi (strain TRS).